The chain runs to 113 residues: uncharacterized protein (113 aa).

This is an uncharacterized protein from Escherichia coli (strain K12).